Reading from the N-terminus, the 226-residue chain is Phosphatidylserine decarboxylase proenzyme (226 aa).

The Schiff-base intermediate with substrate; via pyruvic acid role is filled by serine 184. Serine 184 bears the Pyruvic acid (Ser); by autocatalysis mark.

This sequence belongs to the phosphatidylserine decarboxylase family. PSD-A subfamily. In terms of assembly, heterodimer of a large membrane-associated beta subunit and a small pyruvoyl-containing alpha subunit. The cofactor is pyruvate. In terms of processing, is synthesized initially as an inactive proenzyme. Formation of the active enzyme involves a self-maturation process in which the active site pyruvoyl group is generated from an internal serine residue via an autocatalytic post-translational modification. Two non-identical subunits are generated from the proenzyme in this reaction, and the pyruvate is formed at the N-terminus of the alpha chain, which is derived from the carboxyl end of the proenzyme. The post-translation cleavage follows an unusual pathway, termed non-hydrolytic serinolysis, in which the side chain hydroxyl group of the serine supplies its oxygen atom to form the C-terminus of the beta chain, while the remainder of the serine residue undergoes an oxidative deamination to produce ammonia and the pyruvoyl prosthetic group on the alpha chain.

The protein localises to the cell membrane. It carries out the reaction a 1,2-diacyl-sn-glycero-3-phospho-L-serine + H(+) = a 1,2-diacyl-sn-glycero-3-phosphoethanolamine + CO2. It participates in phospholipid metabolism; phosphatidylethanolamine biosynthesis; phosphatidylethanolamine from CDP-diacylglycerol: step 2/2. Its function is as follows. Catalyzes the formation of phosphatidylethanolamine (PtdEtn) from phosphatidylserine (PtdSer). The protein is Phosphatidylserine decarboxylase proenzyme of Ehrlichia canis (strain Jake).